Reading from the N-terminus, the 299-residue chain is Probable phosphate butyryltransferase (299 aa).

The protein belongs to the phosphate acetyltransferase and butyryltransferase family.

The enzyme catalyses butanoyl-CoA + phosphate = butanoyl phosphate + CoA. Its function is as follows. Catalyzes the conversion of butyryl-CoA through butyryl phosphate to butyrate. The sequence is that of Probable phosphate butyryltransferase (yqiS) from Bacillus subtilis (strain 168).